The primary structure comprises 289 residues: Inorganic pyrophosphatase (289 aa).

Diphosphate is bound at residue Arg80. 3 residues coordinate Mg(2+): Asp117, Asp122, and Asp154.

This sequence belongs to the PPase family. In terms of assembly, homodimer. Mg(2+) is required as a cofactor.

The protein localises to the cytoplasm. It carries out the reaction diphosphate + H2O = 2 phosphate + H(+). The sequence is that of Inorganic pyrophosphatase (ppa1) from Schizosaccharomyces pombe (strain 972 / ATCC 24843) (Fission yeast).